The chain runs to 265 residues: MKKEVCSLAFFKAVFAEFLATLIFVFFGLGSALKWPSALPTILQISIAFGLAIGTLAQALGPVSGGHINPAITLALLIGNQISLLRAVFYVAAQLVGAIAGAGILYWLAPLNARGNLAVNALNNNTTPGKAMVVELILTFQLALCIFSSTDSRRTSPVGSPALSIGLSVTLGHLVGIYFTGCSMNPARSFGPAVVMNRFSPSHWVFWVGPIVGAMLAAILYFYLLFPSSLSLHDRVAVVKGTYEPEEDWEDHREERKKTIELTAH.

Topologically, residues 1 to 12 are cytoplasmic; sequence MKKEVCSLAFFK. Residues 13–33 form a helical membrane-spanning segment; that stretch reads AVFAEFLATLIFVFFGLGSAL. At 34-39 the chain is on the extracellular side; sequence KWPSAL. A helical membrane pass occupies residues 40–60; sequence PTILQISIAFGLAIGTLAQAL. The Cytoplasmic portion of the chain corresponds to 61 to 65; it reads GPVSG. The discontinuously helical intramembrane region spans 66-74; sequence GHINPAITL. The short motif at 69-71 is the NPA 1 element; the sequence is NPA. The Cytoplasmic portion of the chain corresponds to 75–87; sequence ALLIGNQISLLRA. The chain crosses the membrane as a helical span at residues 88–108; the sequence is VFYVAAQLVGAIAGAGILYWL. The Extracellular segment spans residues 109 to 126; the sequence is APLNARGNLAVNALNNNT. Residue asparagine 124 is glycosylated (N-linked (GlcNAc...) asparagine). Residues 127–147 traverse the membrane as a helical segment; that stretch reads TPGKAMVVELILTFQLALCIF. Topologically, residues 148–158 are cytoplasmic; sequence SSTDSRRTSPV. A helical transmembrane segment spans residues 159–179; that stretch reads GSPALSIGLSVTLGHLVGIYF. Position 180 (threonine 180) is a topological domain, extracellular. Residues 181-191 constitute an intramembrane region (discontinuously helical); the sequence is GCSMNPARSFG. The NPA 2 signature appears at 185 to 187; it reads NPA. Residues 192–203 lie on the Extracellular side of the membrane; that stretch reads PAVVMNRFSPSH. A helical membrane pass occupies residues 204-224; sequence WVFWVGPIVGAMLAAILYFYL. Residues 225–265 are Cytoplasmic-facing; it reads LFPSSLSLHDRVAVVKGTYEPEEDWEDHREERKKTIELTAH.

It belongs to the MIP/aquaporin (TC 1.A.8) family. As to quaternary structure, homotetramer; each monomer provides an independent water pore. Interacts with TRPV4; the interaction is probably indirect and regulates TRPV4 activation by hypotonicity. Salivary glands, lacrimal glands, corneal epithelium in eye, trachea and lung.

The protein localises to the apical cell membrane. It localises to the cell membrane. It is found in the cytoplasmic vesicle membrane. The enzyme catalyses H2O(in) = H2O(out). In terms of biological role, aquaporins form homotetrameric transmembrane channels, with each monomer independently mediating water transport across the plasma membrane along its osmotic gradient. Plays an important role in fluid secretion in salivary glands. Required for TRPV4 activation by hypotonicity. Together with TRPV4, controls regulatory volume decrease in salivary epithelial cells. Seems to play a redundant role in water transport in the eye, lung and in sweat glands. The protein is Aquaporin-5 of Rattus norvegicus (Rat).